The following is a 323-amino-acid chain: Rhazimal reductase 2 (323 aa).

Asp53 is an NADP(+) binding site. The active-site Proton donor is Tyr58. Residues 167 to 168, Gln189, 215 to 220, and 289 to 297 each bind NADP(+); these read SN, WSPLLS, and DQIQQIPQR.

The protein belongs to the aldo/keto reductase family. Monomer.

It carries out the reaction rhazimol + NADP(+) = rhazimal + NADPH + 2 H(+). It functions in the pathway alkaloid biosynthesis. Functionally, oxidoreductase involved in the biosynthesis of akuammilan monoterpene indole alkaloids (MIAs) natural products, components with various biological properties such as antidiabetic, antibacterial, anti-inflammatory, anticancer, and antimalarial activities. Catalyzes the conversion of rhazimal to rhazimol. The sequence is that of Rhazimal reductase 2 from Alstonia scholaris (Dogbane).